The following is an 89-amino-acid chain: UPF0147 protein YN1551_1489 (89 aa).

Belongs to the UPF0147 family.

The chain is UPF0147 protein YN1551_1489 from Saccharolobus islandicus (strain Y.N.15.51 / Yellowstone #2) (Sulfolobus islandicus).